Here is a 173-residue protein sequence, read N- to C-terminus: Photosystem I assembly protein Ycf3 (173 aa).

TPR repeat units lie at residues 35 to 68 (AFAYYRDGMSAQADGEYAEALENYYEALNLEDDP), 72 to 105 (SYILYNIGLIHASNGEHDQALEYYHQALENNPRM), and 120 to 153 (GEKAKETGNSRDANSYFDQAAEYWKQAISLAPNN).

The protein belongs to the Ycf3 family.

It is found in the cellular thylakoid membrane. In terms of biological role, essential for the assembly of the photosystem I (PSI) complex. May act as a chaperone-like factor to guide the assembly of the PSI subunits. In Trichodesmium erythraeum (strain IMS101), this protein is Photosystem I assembly protein Ycf3.